The following is a 287-amino-acid chain: ATP synthase gamma chain (287 aa).

It belongs to the ATPase gamma chain family. F-type ATPases have 2 components, CF(1) - the catalytic core - and CF(0) - the membrane proton channel. CF(1) has five subunits: alpha(3), beta(3), gamma(1), delta(1), epsilon(1). CF(0) has three main subunits: a, b and c.

The protein resides in the cell inner membrane. In terms of biological role, produces ATP from ADP in the presence of a proton gradient across the membrane. The gamma chain is believed to be important in regulating ATPase activity and the flow of protons through the CF(0) complex. This is ATP synthase gamma chain from Azotobacter vinelandii (strain DJ / ATCC BAA-1303).